A 341-amino-acid polypeptide reads, in one-letter code: Glycerol-3-phosphate dehydrogenase [NAD(P)+] (341 aa).

NADPH-binding residues include S14, F15, R35, and K108. The sn-glycerol 3-phosphate site is built by K108 and G136. An NADPH-binding site is contributed by A140. 5 residues coordinate sn-glycerol 3-phosphate: K191, D244, S254, R255, and N256. Catalysis depends on K191, which acts as the Proton acceptor. Residue R255 coordinates NADPH. The NADPH site is built by V279 and E281.

It belongs to the NAD-dependent glycerol-3-phosphate dehydrogenase family.

The protein localises to the cytoplasm. It carries out the reaction sn-glycerol 3-phosphate + NAD(+) = dihydroxyacetone phosphate + NADH + H(+). It catalyses the reaction sn-glycerol 3-phosphate + NADP(+) = dihydroxyacetone phosphate + NADPH + H(+). Its pathway is membrane lipid metabolism; glycerophospholipid metabolism. Functionally, catalyzes the reduction of the glycolytic intermediate dihydroxyacetone phosphate (DHAP) to sn-glycerol 3-phosphate (G3P), the key precursor for phospholipid synthesis. This is Glycerol-3-phosphate dehydrogenase [NAD(P)+] from Pseudomonas fluorescens (strain SBW25).